The primary structure comprises 393 residues: LL-diaminopimelate aminotransferase (393 aa).

Substrate-binding residues include Y14 and G41. Pyridoxal 5'-phosphate-binding positions include Y71, 104–105, Y128, N174, Y205, and 233–235; these read AK and SFS. Residues K105, Y128, and N174 each contribute to the substrate site. At K236 the chain carries N6-(pyridoxal phosphate)lysine. Pyridoxal 5'-phosphate is bound by residues R244 and N275. Residues N275 and R369 each contribute to the substrate site.

The protein belongs to the class-I pyridoxal-phosphate-dependent aminotransferase family. LL-diaminopimelate aminotransferase subfamily. As to quaternary structure, homodimer. The cofactor is pyridoxal 5'-phosphate.

It carries out the reaction (2S,6S)-2,6-diaminopimelate + 2-oxoglutarate = (S)-2,3,4,5-tetrahydrodipicolinate + L-glutamate + H2O + H(+). It participates in amino-acid biosynthesis; L-lysine biosynthesis via DAP pathway; LL-2,6-diaminopimelate from (S)-tetrahydrodipicolinate (aminotransferase route): step 1/1. Functionally, involved in the synthesis of meso-diaminopimelate (m-DAP or DL-DAP), required for both lysine and peptidoglycan biosynthesis. Catalyzes the direct conversion of tetrahydrodipicolinate to LL-diaminopimelate. This chain is LL-diaminopimelate aminotransferase, found in Chlamydia muridarum (strain MoPn / Nigg).